Reading from the N-terminus, the 163-residue chain is MFNKLMEVLMSFNLPRIRNKSELQHHTNKQSYVDDVFNNFFNEIASFSYPTHYNNKILSPRTDITENESEYHLEVELPGVTQDNIDLKIDSNILTIDGKKEQSTEKKDHNYHMKERYYGSFSRSISLPSNVDEEHVTANFKDGILSIKIPKKEQSKAKKIKIS.

The 111-residue stretch at 53–163 (YNNKILSPRT…QSKAKKIKIS (111 aa)) folds into the sHSP domain.

Belongs to the small heat shock protein (HSP20) family.

This chain is Small heat shock protein C4 (hspc4-1), found in Rickettsia felis (strain ATCC VR-1525 / URRWXCal2) (Rickettsia azadi).